Consider the following 204-residue polypeptide: 3-isopropylmalate dehydratase small subunit (204 aa).

It belongs to the LeuD family. LeuD type 1 subfamily. Heterodimer of LeuC and LeuD.

The catalysed reaction is (2R,3S)-3-isopropylmalate = (2S)-2-isopropylmalate. Its pathway is amino-acid biosynthesis; L-leucine biosynthesis; L-leucine from 3-methyl-2-oxobutanoate: step 2/4. In terms of biological role, catalyzes the isomerization between 2-isopropylmalate and 3-isopropylmalate, via the formation of 2-isopropylmaleate. This is 3-isopropylmalate dehydratase small subunit from Roseiflexus sp. (strain RS-1).